Reading from the N-terminus, the 486-residue chain is Probable transporter MCH1 (486 aa).

The next 6 helical transmembrane spans lie at 31 to 51, 69 to 89, 91 to 111, 132 to 152, 164 to 184, and 204 to 224; these read ISFF…LFSL, FIAS…GYLA, CYGP…SYFV, FGIC…SSLL, LAIS…SQLM, and FFGV…SVVS. Positions 236–260 are disordered; it reads EMEEADEESPLMTSRSRHSHHSCED. A helical membrane pass occupies residues 280-300; it reads FINFLKDKSAWLLLASLILNI. Residue asparagine 322 is glycosylated (N-linked (GlcNAc...) asparagine). 2 helical membrane passes run 327–348 and 357–377; these read VSIM…SDYL and ICRV…QFMV. A glycan (N-linked (GlcNAc...) asparagine) is linked at asparagine 390. Transmembrane regions (helical) follow at residues 395–415 and 417–437; these read GGLF…DMMG and TWGS…IFYG. Asparagine 457 carries N-linked (GlcNAc...) asparagine glycosylation. Residues 458–478 traverse the membrane as a helical segment; the sequence is LTAVGLSVSLILIIIVWKGIW.

It belongs to the major facilitator superfamily.

The protein localises to the vacuole membrane. Functionally, probable transporter. This Debaryomyces hansenii (strain ATCC 36239 / CBS 767 / BCRC 21394 / JCM 1990 / NBRC 0083 / IGC 2968) (Yeast) protein is Probable transporter MCH1 (MCH1).